A 99-amino-acid chain; its full sequence is Large ribosomal subunit protein eL21 (99 aa).

Over residues 1–18 the composition is skewed to basic residues; that stretch reads MVKHSRGNRTRSRKLLKK. The segment at 1–26 is disordered; it reads MVKHSRGNRTRSRKLLKKSPRERGAV.

It belongs to the eukaryotic ribosomal protein eL21 family.

This Metallosphaera sedula (strain ATCC 51363 / DSM 5348 / JCM 9185 / NBRC 15509 / TH2) protein is Large ribosomal subunit protein eL21.